We begin with the raw amino-acid sequence, 368 residues long: tRNA N6-adenosine threonylcarbamoyltransferase (368 aa).

The Fe cation site is built by histidine 108 and histidine 112. Residues 149–153, aspartate 183, glycine 196, aspartate 200, and asparagine 301 each bind substrate; that span reads LVSGG. Aspartate 329 serves as a coordination point for Fe cation.

This sequence belongs to the KAE1 / TsaD family. It depends on Fe(2+) as a cofactor.

It localises to the cytoplasm. It catalyses the reaction L-threonylcarbamoyladenylate + adenosine(37) in tRNA = N(6)-L-threonylcarbamoyladenosine(37) in tRNA + AMP + H(+). Required for the formation of a threonylcarbamoyl group on adenosine at position 37 (t(6)A37) in tRNAs that read codons beginning with adenine. Is involved in the transfer of the threonylcarbamoyl moiety of threonylcarbamoyl-AMP (TC-AMP) to the N6 group of A37, together with TsaE and TsaB. TsaD likely plays a direct catalytic role in this reaction. In Paenarthrobacter aurescens (strain TC1), this protein is tRNA N6-adenosine threonylcarbamoyltransferase.